An 85-amino-acid polypeptide reads, in one-letter code: MAHKKAGGSTRNGRDSESKRLGVKRFGGESVLAGNIIVRQRGTQFHAGNNVGLGKDHTLFALTDGKVKFEVKGPKNRKFVSIEAE.

The disordered stretch occupies residues 1-22; it reads MAHKKAGGSTRNGRDSESKRLG.

It belongs to the bacterial ribosomal protein bL27 family.

The sequence is that of Large ribosomal subunit protein bL27 from Vibrio vulnificus (strain CMCP6).